Reading from the N-terminus, the 448-residue chain is Death-associated protein kinase 3 (448 aa).

The Protein kinase domain occupies 13 to 275; it reads YEMGEELGSG…IAQSLEHSWI (263 aa). ATP contacts are provided by residues 19–27 and K42; that span reads LGSGQFAIV. D139 acts as the Proton acceptor in catalysis. Positions 161–204 are activation segment; the sequence is DFGIAHRIEAGSEFKNIFGTPEFVAPEIVNYEPLGLEADMWSIG. Phosphothreonine occurs at positions 180 and 225. T265 is subject to Phosphothreonine; by autocatalysis. Phosphothreonine; by ROCK1 is present on T265. A Phosphoserine; by DAPK1 modification is found at S304. Phosphoserine; by autocatalysis and DAPK1 is present on S306. Phosphoserine; by DAPK1 occurs at positions 307, 313, and 321. The segment at 390 to 448 is interaction with CDC5L; the sequence is AQEEARAALLGAGGLKRRLCRLENRYDALAAQVAAEVQFVRDLVRALEQERLQAECGVR. The leucine-zipper stretch occupies residues 422–436; sequence VAAEVQFVRDLVRAL.

It belongs to the protein kinase superfamily. CAMK Ser/Thr protein kinase family. DAP kinase subfamily. In terms of assembly, homooligomer in its kinase-active form (homotrimers and homodimers are reported); monomeric in its kinase-inactive form. Homodimerization is required for activation segment autophosphorylation. Interacts with DAXX, PAWR, ATF4, NLK, TCF7L2, UBE2D1, UBE2D2, UBE2D3, and CDC5L. Interacts with AR; enhanced by AATF. Interacts with LUZP1; the interaction is likely to occur throughout the cell cycle and reduces the LUZP1-mediated suppression of MYL9 phosphorylation. Requires Mg(2+) as cofactor. Ubiquitinated. Ubiquitination mediated by the UBE2D3 E3 ligase does not lead to proteasomal degradation, but influences promyelocytic leukemia protein nuclear bodies (PML-NBs) formation in the nucleus. Post-translationally, the phosphorylation status is critical for kinase activity, oligomerization and intracellular localization. Phosphorylation at Thr-180, Thr-225 and Thr-265 is essential for activity. The phosphorylated form is localized in the cytoplasm and nuclear translocation or retention is maximal when it is not phosphorylated. Phosphorylation increases the trimeric form, and its dephosphorylation favors a kinase-inactive monomeric form. In terms of tissue distribution, highly expressed in heart, brain, lung, skeletal muscle, kidney and testis. Lower levels in liver and spleen.

It localises to the nucleus. The protein localises to the PML body. Its subcellular location is the cytoplasm. It is found in the cytoskeleton. The protein resides in the microtubule organizing center. It localises to the centrosome. The protein localises to the chromosome. Its subcellular location is the centromere. It is found in the spindle. The protein resides in the midbody. The enzyme catalyses L-seryl-[protein] + ATP = O-phospho-L-seryl-[protein] + ADP + H(+). It carries out the reaction L-threonyl-[protein] + ATP = O-phospho-L-threonyl-[protein] + ADP + H(+). A sequential activation is proposed: autophosphorylation at consensus sites is leading to dimerization of the catalytic domain and activation segment exchange (producing an active confirmation of both kinase modules in trans) followed by phosphorylation at Thr-180 in the activation segment and at other regulatory sites. Phosphorylation at Thr-180, Thr-225 and Thr-265 is essential for activity. Inhibited by pyridone 6 (K00225), a potent, ATP-competitive inhibitor. Phosphorylation at Thr-180, Thr-225 and Thr-265 is essential for activity. Its function is as follows. Serine/threonine kinase which is involved in the regulation of apoptosis, autophagy, transcription, translation and actin cytoskeleton reorganization. Regulates both type I (caspase-dependent) apoptotic and type II (caspase-independent) autophagic cell deaths signal, depending on the cellular setting. Involved in formation of promyelocytic leukemia protein nuclear body (PML-NB). Involved in apoptosis involving PAWR which mediates cytoplasmic relocation; in vitro phosphorylates PAWR. Regulates myosin phosphorylation in both smooth muscle and non-muscle cells. In smooth muscle, regulates myosin either directly by phosphorylating MYL12B and MYL9 or through inhibition of smooth muscle myosin phosphatase (SMPP1M) via phosphorylation of PPP1R12A; the inhibition of SMPP1M functions to enhance muscle responsiveness to Ca(2+) and promote a contractile state. Phosphorylates MYL12B in non-muscle cells leading to reorganization of actin cytoskeleton such as in regulation of cell polarity and cell migration. Positively regulates canonical Wnt/beta-catenin signaling through interaction with NLK and TCF7L2; disrupts the NLK-TCF7L2 complex thereby influencing the phosphorylation of TCF7L2 by NLK. Phosphorylates STAT3 and enhances its transcriptional activity. Enhances transcription from AR-responsive promoters in a hormone- and kinase-dependent manner. Phosphorylates histone H3 on 'Thr-11' at centromeres during mitosis. Phosphorylates RPL13A on 'Ser-77' upon interferon-gamma activation which is causing RPL13A release from the ribosome, RPL13A association with the GAIT complex and its subsequent involvement in transcript-selective translation inhibition. The protein is Death-associated protein kinase 3 (Dapk3) of Mus musculus (Mouse).